We begin with the raw amino-acid sequence, 622 residues long: MPRITKLPESVANKISAGEVVQRPASVVKELIENAIDAGAGRIVLSIKDAGKQLVQIIDNGHGMSEPDALMCVERFATSKISSAEELETLGTLGFRGEALASISSVSHFELKSCSEGMDAAFLHRYEGGELVEKSKAAADRGTTISVRNLFFNVPARRKFLKTNATEFKHIFETVKAQALAYPEIQWQLFNDDEELFHFRSSDMHERLNFFFGEEFADSLIEIREENDFLSLYGYVGKPGMLKRQKNDQLFYINRRVIQNRMLSQALQQAYGELLVERQTPFALLFLGLDTRQVDINVHPAKLEVKFEDERNIRNMVYPIVKRAVQLQDFAPDVGIAGLLERQMTQDAMNPENSLRKLEYKRAAGPSSTTDDLYRSYLSELPPVSSPPPGSIGEQGEMFSDLLAPSRDRELKPSVYDRSALLQSDENRPDPAGSDSKIWQLHNKYIVCQIKTGLMVIDQHVAHERVLYERAVEIMNNNVPNSQQLLFPQKIELKSWEYEIFQEIRDDLCRLGFNLRSFGNRTVMIEGIAQDVRNGTEAVILQNMIDEYQQNALKLKLEKRENLAKSYSCRNAIMSGQKLSLEEMRSLIDRLFATRMPYVCPHGRPVIIKISLDQLDRMFGRK.

The protein belongs to the DNA mismatch repair MutL/HexB family.

Its function is as follows. This protein is involved in the repair of mismatches in DNA. It is required for dam-dependent methyl-directed DNA mismatch repair. May act as a 'molecular matchmaker', a protein that promotes the formation of a stable complex between two or more DNA-binding proteins in an ATP-dependent manner without itself being part of a final effector complex. This is DNA mismatch repair protein MutL from Prosthecochloris aestuarii (strain DSM 271 / SK 413).